The sequence spans 342 residues: Ferrochelatase (342 aa).

Fe cation is bound by residues histidine 188 and glutamate 268.

This sequence belongs to the ferrochelatase family.

It localises to the cytoplasm. It carries out the reaction heme b + 2 H(+) = protoporphyrin IX + Fe(2+). The protein operates within porphyrin-containing compound metabolism; protoheme biosynthesis; protoheme from protoporphyrin-IX: step 1/1. Its function is as follows. Catalyzes the ferrous insertion into protoporphyrin IX. In Rickettsia typhi (strain ATCC VR-144 / Wilmington), this protein is Ferrochelatase.